Reading from the N-terminus, the 84-residue chain is Insulin-like peptide 05 (84 aa).

Positions 1–22 are cleaved as a signal peptide; the sequence is MKTPILFVVVVAVLIVTDSAEG. Residues 23 to 37 constitute a propeptide that is removed on maturation; the sequence is FKGKANSFLKPLQRR. Intrachain disulfides connect C43/C48, C44/C73, and C57/C61.

The protein belongs to the insulin family.

The protein resides in the secreted. In terms of biological role, insulin decreases blood glucose concentration. May have evolved to activate insulin receptors (INSR) in vertebrates. Molecular docking studies reveals unique interaction with the human insulin receptor. In vivo, insulin-like peptide injection reduces blood glucose levels in two models of zebrafish diabetes (streptozotocin- and glucose-induced). Also shorter swimming distance of zebrafish larvae, an effect which is not observed with human insulin. The chain is Insulin-like peptide 05 from Exaiptasia diaphana (Tropical sea anemone).